A 319-amino-acid chain; its full sequence is Cell surface A33 antigen (319 aa).

The first 21 residues, 1–21 (MLGKAGSVVWMLCAIWVAADA), serve as a signal peptide directing secretion. Residues 22–134 (LTVETTQDIL…QDVNAKSRVR (113 aa)) enclose the Ig-like V-type domain. Residues 22 to 235 (LTVETTQDIL…VAPRPPSMNI (214 aa)) are Extracellular-facing. 3 cysteine pairs are disulfide-bonded: Cys-43–Cys-117, Cys-146–Cys-222, and Cys-162–Cys-211. 4 N-linked (GlcNAc...) asparagine glycosylation sites follow: Asn-99, Asn-112, Asn-200, and Asn-223. The region spanning 140–227 (PPSKPDCSIQ…GIESCNITVA (88 aa)) is the Ig-like C2-type domain. The helical transmembrane segment at 236-256 (ALYAGIAGGVFVALIIIGVIV) threads the bilayer. At 257–319 (YCCCCREKDD…GRSTPDQPFQ (63 aa)) the chain is on the cytoplasmic side. 2 stretches are compositionally biased toward basic and acidic residues: residues 267 to 276 (KDQDREDARP) and 284 to 308 (PKKE…DRWS). The tract at residues 267 to 319 (KDQDREDARPNRAAYQVPKKEQKEISRGREDEDDHRHEDRWSSGRSTPDQPFQ) is disordered. The segment covering 309 to 319 (SGRSTPDQPFQ) has biased composition (polar residues).

Post-translationally, palmitoylated.

It is found in the membrane. Functionally, may play a role in cell-cell recognition and signaling. The polypeptide is Cell surface A33 antigen (Gpa33) (Mus musculus (Mouse)).